A 74-amino-acid chain; its full sequence is uncharacterized protein (74 aa).

The protein localises to the mitochondrion. This is an uncharacterized protein from Marchantia polymorpha (Common liverwort).